A 354-amino-acid chain; its full sequence is Tsukushi (354 aa).

The first 17 residues, 1-17 (MLCSLFLLLLAVGRVQT), serve as a signal peptide directing secretion. Residues 18-59 (TRPCFPGCQCEEETFGLFDSFSLIRVDCSSLGPHIVPVPIPL) enclose the LRRNT domain. 10 LRR repeats span residues 60–81 (DTAHLDLSSNRLETVNESVLAG), 86–107 (TLAGLDLSYNLLTSIMPSAFSR), 110–131 (YLESLDLSHNGLAALPAEIFTS), 133–154 (PLSDINLSHNRLREVSISAFTT), 160–180 (ALHVDLSHNLIHRLLPHPARA), 186–207 (TIQSLNLSWNRFRAVPDLRDLP), 208–228 (LRYLSLDGNPLATINPDAFMG), 231–253 (GLTHLSLASLQGILHLPPHGFRE), 256–277 (GLQVLDLSGNPKLKWAGAEVFS), and 281–302 (LLQELDLSGSSLVPLPEMLLHH). Residue asparagine 75 is glycosylated (N-linked (GlcNAc...) asparagine). Asparagine 138 carries N-linked (GlcNAc...) asparagine glycosylation. Asparagine 191 carries an N-linked (GlcNAc...) asparagine glycan.

As to quaternary structure, interacts with FZD4 (via FZ domain); competes with WNT2B for binding to FZD4, inhibiting Wnt signaling and repressing peripheral eye development. Interacts with TGFB1; the interaction contributes to regulation of the hair cycle. Interacts with netrin. Interacts with CCN2. Expressed in macrophages in inflamed wounds with wound expression starting 2 days post-wounding (dpw) (at protein level). At 7 dpw, expressed from epidermis and extracellular matrix in the wound edge to neoepidermis and granulation tissue and in panniculus carnosus under the granulation tissue (at protein level). After fibrosis, disappears in the dermal area at 11 dpw (at protein level). Expressed in the hair follicle during morphogenesis and the hair cycle (at protein level). In embryonic brain, strong expression in the olfactory bulb, anterior olfactory nucleus, neocortex, piriform cortex, glial wedge, midline zipper glia, indusium griseum and the area surrounding the anterior commissure (AC) but not on AC axons (at protein level). In the adult eye, expressed in retinal layers, lens epithelium, and ciliary body where it is expressed predominantly in the inner non-pigmented layer. Expressed in almost all brain regions in the embryo, in the cortex and the lateral ventricle at P0 and is restricted to the subventricular zone and lateral nucleus of the amygdala in adults. Prominent expression in hippocampal regions from early postnatal stages until postnatal day 15 and gradually declines at later stages. Expressed in almost all bone regions in the femurs of juveniles. In the inner ear, accumulates in nonprosensory regions during early embryonic stages and in both nonprosensory and prosensory regions in late embryonic stages. In the adult ear, expressed in the organ of Corti, spiral ganglion cells, and the stria vascularis. Highly expressed in the liver where it is detected primarily in hepatocytes but not in non-parenchymal cells.

Its subcellular location is the secreted. In terms of biological role, contributes to various developmental events and other processes such as wound healing and cholesterol homeostasis through its interactions with multiple signaling pathways. Wnt signaling inhibitor which competes with WNT2B for binding to Wnt receptor FZD4 and represses WNT2B-dependent development of the peripheral eye. Plays a role in regulating the hair cycle by controlling TGFB1 signaling. Required for the development of the anterior commissure in the brain by inhibiting neurite outgrowth. Essential for terminal differentiation of hippocampal neural stem cells. Plays a role in regulating bone elongation and bone mass by modulating growth plate chondrocyte function and overall body size. Required for development of the inner ear through its involvement in stereocilia formation in inner hair cells. Facilitates wound healing by inhibiting secretion of TGFB1 from macrophages which prevents myofibroblast differentiation, maintaining inflammatory cell quiescence. Plays a role in cholesterol homeostasis by reducing circulating high-density lipoprotein cholesterol, lowering cholesterol efflux capacity and decreasing cholesterol-to-bile acid conversion in the liver. In one study, shown to negatively regulate sympathetic innervation in brown fat, leading to reduced energy expenditure. In another study, shown not to affect brown fat thermogenic capacity, body weight gain or glucose homeostasis. This Mus musculus (Mouse) protein is Tsukushi.